The chain runs to 181 residues: Ribonuclease HII (181 aa).

In terms of domain architecture, RNase H type-2 spans 1 to 181 (MICGIDEVGR…SLHRRNFKLI (181 aa)). A divalent metal cation contacts are provided by aspartate 6, glutamate 7, and aspartate 98.

It belongs to the RNase HII family. Mn(2+) serves as cofactor. The cofactor is Mg(2+).

The protein localises to the cytoplasm. The catalysed reaction is Endonucleolytic cleavage to 5'-phosphomonoester.. Its function is as follows. Endonuclease that specifically degrades the RNA of RNA-DNA hybrids. The polypeptide is Ribonuclease HII (Borrelia garinii subsp. bavariensis (strain ATCC BAA-2496 / DSM 23469 / PBi) (Borreliella bavariensis)).